Consider the following 586-residue polypeptide: Maltogenic alpha-amylase (586 aa).

Asn-147, Asn-152, Asp-153, Gly-172, and Asp-174 together coordinate Ca(2+). Substrate-binding residues include His-247 and Arg-326. Catalysis depends on Asp-328, which acts as the Nucleophile. Glu-357 serves as the catalytic Proton donor. Residues 423–424 (HD), Asp-468, and Arg-472 each bind substrate.

The protein belongs to the glycosyl hydrolase 13 family. It depends on Ca(2+) as a cofactor.

It carries out the reaction hydrolysis of (1-&gt;4)-alpha-D-glucosidic linkages in polysaccharides so as to remove successive alpha-maltose residues from the non-reducing ends of the chains.. Functionally, converts starch into maltose. The polypeptide is Maltogenic alpha-amylase (Bacillus acidopullulyticus).